An 89-amino-acid polypeptide reads, in one-letter code: Small ribosomal subunit protein uS15 (89 aa).

Residues 1 to 10 (MSITAEKKQE) are compositionally biased toward basic and acidic residues. The tract at residues 1 to 24 (MSITAEKKQEVIQSNARAEGDTGS) is disordered.

The protein belongs to the universal ribosomal protein uS15 family. As to quaternary structure, part of the 30S ribosomal subunit. Forms a bridge to the 50S subunit in the 70S ribosome, contacting the 23S rRNA.

One of the primary rRNA binding proteins, it binds directly to 16S rRNA where it helps nucleate assembly of the platform of the 30S subunit by binding and bridging several RNA helices of the 16S rRNA. In terms of biological role, forms an intersubunit bridge (bridge B4) with the 23S rRNA of the 50S subunit in the ribosome. In Novosphingobium aromaticivorans (strain ATCC 700278 / DSM 12444 / CCUG 56034 / CIP 105152 / NBRC 16084 / F199), this protein is Small ribosomal subunit protein uS15.